We begin with the raw amino-acid sequence, 629 residues long: Probable alpha-L-arabinofuranosidase A (629 aa).

A signal peptide spans 1 to 25 (MVALSTLSGLSALPFLFSLVQNVYG). Asparagine 36, asparagine 51, asparagine 140, asparagine 152, asparagine 168, asparagine 171, asparagine 260, asparagine 494, and asparagine 534 each carry an N-linked (GlcNAc...) asparagine glycan.

The protein belongs to the glycosyl hydrolase 51 family.

It is found in the secreted. The catalysed reaction is Hydrolysis of terminal non-reducing alpha-L-arabinofuranoside residues in alpha-L-arabinosides.. Its pathway is glycan metabolism; L-arabinan degradation. Alpha-L-arabinofuranosidase involved in the degradation of arabinoxylan, a major component of plant hemicellulose. Acts only on small linear 1,5-alpha-linked L-arabinofuranosyl oligosaccharides. This Aspergillus oryzae (strain ATCC 42149 / RIB 40) (Yellow koji mold) protein is Probable alpha-L-arabinofuranosidase A (abfA).